The following is a 383-amino-acid chain: MENNFIVNENEKRVLKQIFNNSNISRTQISKNLELNKATISNILNNLKHKSLVNEVGEGNSTKSGGRKPILLEINQKYGYYISMDLTYDSVELMYNYFDATILKQDSYELNDKNVSSILQILKSNINVSEKYDTLYGLLGISISIHGIVDDEQNIINLPFHKNEKRTFTDELKSFTNVPVVIENEANLSALYEKSLYINSNINNLITLSIHKGIGAGIIINKKLYRGSNGEAGEIGKTLVLESINNNDNKYYKIEDICSQDALIQKINNRLGVTLTFTELIQYYNEGNSIVAHEIKQFINKMTVLIHNLNTQFNPDAIYINCPLINELPNILNEIKEQFSCFSQGSPIQLHLTTNVKQATLLGGTLAIMQKTLNINNIQMNIK.

The segment at residues 26–45 (RTQISKNLELNKATISNILN) is a DNA-binding region (H-T-H motif).

This sequence belongs to the ROK (NagC/XylR) family.

In terms of biological role, transcriptional repressor of xylose-utilizing enzymes. The protein is Xylose repressor (xylR) of Staphylococcus xylosus.